We begin with the raw amino-acid sequence, 211 residues long: Protein-methionine-sulfoxide reductase heme-binding subunit MsrQ (211 aa).

A run of 4 helical transmembrane segments spans residues 10–30 (WLKVCLHLAGLLPFLWLVWAI), 82–102 (LWCFAWATLHLTSYALLELGV), 116–136 (PYLTLGIISWVILLALAFTST), and 153–173 (FVYLVAILAPIHYLWSVKIIS).

The protein belongs to the MsrQ family. In terms of assembly, heterodimer of a catalytic subunit (MsrP) and a heme-binding subunit (MsrQ). FMN is required as a cofactor. It depends on heme b as a cofactor.

The protein resides in the cell inner membrane. Part of the MsrPQ system that repairs oxidized periplasmic proteins containing methionine sulfoxide residues (Met-O), using respiratory chain electrons. Thus protects these proteins from oxidative-stress damage caused by reactive species of oxygen and chlorine generated by the host defense mechanisms. MsrPQ is essential for the maintenance of envelope integrity under bleach stress, rescuing a wide series of structurally unrelated periplasmic proteins from methionine oxidation, including the primary periplasmic chaperone SurA and the lipoprotein Pal. MsrQ provides electrons for reduction to the reductase catalytic subunit MsrP, using the quinone pool of the respiratory chain. This is Protein-methionine-sulfoxide reductase heme-binding subunit MsrQ from Shigella dysenteriae serotype 1 (strain Sd197).